Consider the following 456-residue polypeptide: tRNA-2-methylthio-N(6)-dimethylallyladenosine synthase (456 aa).

In terms of domain architecture, MTTase N-terminal spans K3–A120. Residues C12, C49, C83, C157, C161, and C164 each coordinate [4Fe-4S] cluster. The 235-residue stretch at R143–R377 folds into the Radical SAM core domain. The 68-residue stretch at Q380 to M447 folds into the TRAM domain.

Belongs to the methylthiotransferase family. MiaB subfamily. In terms of assembly, monomer. It depends on [4Fe-4S] cluster as a cofactor.

It localises to the cytoplasm. The enzyme catalyses N(6)-dimethylallyladenosine(37) in tRNA + (sulfur carrier)-SH + AH2 + 2 S-adenosyl-L-methionine = 2-methylsulfanyl-N(6)-dimethylallyladenosine(37) in tRNA + (sulfur carrier)-H + 5'-deoxyadenosine + L-methionine + A + S-adenosyl-L-homocysteine + 2 H(+). Catalyzes the methylthiolation of N6-(dimethylallyl)adenosine (i(6)A), leading to the formation of 2-methylthio-N6-(dimethylallyl)adenosine (ms(2)i(6)A) at position 37 in tRNAs that read codons beginning with uridine. The chain is tRNA-2-methylthio-N(6)-dimethylallyladenosine synthase from Paraburkholderia phymatum (strain DSM 17167 / CIP 108236 / LMG 21445 / STM815) (Burkholderia phymatum).